Here is a 103-residue protein sequence, read N- to C-terminus: Large ribosomal subunit protein uL24 (103 aa).

The protein belongs to the universal ribosomal protein uL24 family. In terms of assembly, part of the 50S ribosomal subunit.

Its function is as follows. One of two assembly initiator proteins, it binds directly to the 5'-end of the 23S rRNA, where it nucleates assembly of the 50S subunit. In terms of biological role, one of the proteins that surrounds the polypeptide exit tunnel on the outside of the subunit. The sequence is that of Large ribosomal subunit protein uL24 from Lachnospira eligens (strain ATCC 27750 / DSM 3376 / VPI C15-48 / C15-B4) (Eubacterium eligens).